Here is a 288-residue protein sequence, read N- to C-terminus: ATP synthase gamma chain (288 aa).

Belongs to the ATPase gamma chain family. As to quaternary structure, F-type ATPases have 2 components, CF(1) - the catalytic core - and CF(0) - the membrane proton channel. CF(1) has five subunits: alpha(3), beta(3), gamma(1), delta(1), epsilon(1). CF(0) has three main subunits: a, b and c.

It is found in the cell inner membrane. Its function is as follows. Produces ATP from ADP in the presence of a proton gradient across the membrane. The gamma chain is believed to be important in regulating ATPase activity and the flow of protons through the CF(0) complex. The chain is ATP synthase gamma chain from Vibrio vulnificus (strain CMCP6).